The sequence spans 243 residues: Probable transcriptional regulatory protein Smlt3713 (243 aa).

The protein belongs to the TACO1 family.

It localises to the cytoplasm. This Stenotrophomonas maltophilia (strain K279a) protein is Probable transcriptional regulatory protein Smlt3713.